Reading from the N-terminus, the 371-residue chain is Dual-specificity RNA methyltransferase RlmN (371 aa).

E99 (proton acceptor) is an active-site residue. Residues 106 to 333 (DDNRATLCIS…AIRRASKGQD (228 aa)) enclose the Radical SAM core domain. C113 and C338 are disulfide-bonded. Residues C120, C124, and C127 each coordinate [4Fe-4S] cluster. Residues 165–166 (GE), S197, 219–221 (SLN), and N295 contribute to the S-adenosyl-L-methionine site. C338 (S-methylcysteine intermediate) is an active-site residue. The segment at 345–371 (LTVSPPAQESERNSARPDRSQGKGKHL) is disordered. The segment covering 353–365 (ESERNSARPDRSQ) has biased composition (basic and acidic residues).

This sequence belongs to the radical SAM superfamily. RlmN family. [4Fe-4S] cluster is required as a cofactor.

It is found in the cytoplasm. The catalysed reaction is adenosine(2503) in 23S rRNA + 2 reduced [2Fe-2S]-[ferredoxin] + 2 S-adenosyl-L-methionine = 2-methyladenosine(2503) in 23S rRNA + 5'-deoxyadenosine + L-methionine + 2 oxidized [2Fe-2S]-[ferredoxin] + S-adenosyl-L-homocysteine. It carries out the reaction adenosine(37) in tRNA + 2 reduced [2Fe-2S]-[ferredoxin] + 2 S-adenosyl-L-methionine = 2-methyladenosine(37) in tRNA + 5'-deoxyadenosine + L-methionine + 2 oxidized [2Fe-2S]-[ferredoxin] + S-adenosyl-L-homocysteine. Specifically methylates position 2 of adenine 2503 in 23S rRNA and position 2 of adenine 37 in tRNAs. m2A2503 modification seems to play a crucial role in the proofreading step occurring at the peptidyl transferase center and thus would serve to optimize ribosomal fidelity. In Syntrophotalea carbinolica (strain DSM 2380 / NBRC 103641 / GraBd1) (Pelobacter carbinolicus), this protein is Dual-specificity RNA methyltransferase RlmN.